Here is a 93-residue protein sequence, read N- to C-terminus: Cobalt transport protein CbiN (93 aa).

2 helical membrane-spanning segments follow: residues 5-25 (LMLL…NHGG) and 63-83 (LLFT…LGYC).

Belongs to the CbiN family. As to quaternary structure, forms an energy-coupling factor (ECF) transporter complex composed of an ATP-binding protein (A component, CbiO), a transmembrane protein (T component, CbiQ) and 2 possible substrate-capture proteins (S components, CbiM and CbiN) of unknown stoichimetry.

Its subcellular location is the cell inner membrane. It participates in cofactor biosynthesis; adenosylcobalamin biosynthesis. Functionally, part of the energy-coupling factor (ECF) transporter complex CbiMNOQ involved in cobalt import. This is Cobalt transport protein CbiN from Salmonella paratyphi B (strain ATCC BAA-1250 / SPB7).